The following is a 192-amino-acid chain: Peptidyl-tRNA hydrolase (192 aa).

Y17 contributes to the tRNA binding site. Catalysis depends on H22, which acts as the Proton acceptor. TRNA-binding residues include Y68, N70, and N116.

The protein belongs to the PTH family. As to quaternary structure, monomer.

The protein resides in the cytoplasm. The catalysed reaction is an N-acyl-L-alpha-aminoacyl-tRNA + H2O = an N-acyl-L-amino acid + a tRNA + H(+). Functionally, hydrolyzes ribosome-free peptidyl-tRNAs (with 1 or more amino acids incorporated), which drop off the ribosome during protein synthesis, or as a result of ribosome stalling. Catalyzes the release of premature peptidyl moieties from peptidyl-tRNA molecules trapped in stalled 50S ribosomal subunits, and thus maintains levels of free tRNAs and 50S ribosomes. The polypeptide is Peptidyl-tRNA hydrolase (Mycolicibacterium vanbaalenii (strain DSM 7251 / JCM 13017 / BCRC 16820 / KCTC 9966 / NRRL B-24157 / PYR-1) (Mycobacterium vanbaalenii)).